Reading from the N-terminus, the 122-residue chain is Large ribosomal subunit protein uL14 (122 aa).

Belongs to the universal ribosomal protein uL14 family. Part of the 50S ribosomal subunit. Forms a cluster with proteins L3 and L19. In the 70S ribosome, L14 and L19 interact and together make contacts with the 16S rRNA in bridges B5 and B8.

In terms of biological role, binds to 23S rRNA. Forms part of two intersubunit bridges in the 70S ribosome. This chain is Large ribosomal subunit protein uL14, found in Nitrosococcus oceani (strain ATCC 19707 / BCRC 17464 / JCM 30415 / NCIMB 11848 / C-107).